The chain runs to 111 residues: Stress-response A/B barrel domain-containing protein At5g22580 (111 aa).

The Stress-response A/B barrel domain occupies 6–98; sequence FKHLVVVKFK…VIDKIVLLDF (93 aa). Positions 31, 34, 35, and 37 each coordinate Mg(2+).

Homodimer. The cofactor is Mg(2+).

Involved in stress response. This is Stress-response A/B barrel domain-containing protein At5g22580 from Arabidopsis thaliana (Mouse-ear cress).